Here is a 456-residue protein sequence, read N- to C-terminus: MARLLTNRQADELHKSIIAYLSANDLPNTAAALRAELNLTEEDFDATAVKKYETLLEKKWTSIVRLQKKIMDLEARNAALQSELDNLTPASLLKPRRDPTSWLPTHPPRYSLESHRDTINCIAFHPKFSSLASGSDDFTIKIWDWELGELEMTLKGHTRAVLDVDYGSPQGITMLASCSSDLSVKLWDPAEGYKNVRTLLGHDHSVSAVRFIPCRNLLASASRDKDVRIWDVTTGYCVRSIQGHTGWVRDVCPSFDGNFLFSSGDDMTARLWDISAIPNPENKVTMAGHEHFIECCALAPPTSYQYLAPVAGLKGPSYPKSAAEFMATGSRDKTIKVWDVRGTCLMTLIGHDNWVRGIVFHPAGKYLLSVSDDRTLRCWDLSQEGKCVKTIKDAHDRFVTCLSWAPGVAKDVPAIPSNTAKGESSEIKETLKSPDVQIRCVIATGSVDRKLQIFAA.

The 33-residue stretch at 9–41 folds into the LisH domain; sequence QADELHKSIIAYLSANDLPNTAAALRAELNLTE. The stretch at 61-88 forms a coiled coil; it reads TSIVRLQKKIMDLEARNAALQSELDNLT. 8 WD repeats span residues 114–153, 156–197, 201–240, 243–282, 288–348, 350–389, 394–437, and 439–456; these read SHRD…LEMT, GHTR…KNVR, GHDH…CVRS, GHTG…NPEN, GHEH…LMTL, GHDN…KCVK, AHDR…PDVQ, and RCVI…IFAA.

This sequence belongs to the WD repeat LIS1/nudF family. Self-associates. Interacts with NDL1 and dynein.

It localises to the cytoplasm. The protein localises to the cytoskeleton. The protein resides in the spindle pole. Its function is as follows. Positively regulates the activity of the minus-end directed microtubule motor protein dynein. May enhance dynein-mediated microtubule sliding by targeting dynein to the microtubule plus end. Required for nuclear migration during vegetative growth as well as development. Required for retrograde early endosome (EE) transport from the hyphal tip. Required for localization of dynein to the mitotic spindle poles. Recruits additional proteins to the dynein complex at SPBs. This is Nuclear distribution protein PAC1 from Ajellomyces capsulatus (strain H143) (Darling's disease fungus).